A 387-amino-acid chain; its full sequence is Sulfopyruvate decarboxylase (387 aa).

It belongs to the TPP enzyme family. It depends on thiamine diphosphate as a cofactor.

The catalysed reaction is 3-sulfopyruvate + H(+) = sulfoacetaldehyde + CO2. It functions in the pathway cofactor biosynthesis; coenzyme M biosynthesis. Its function is as follows. Involved in the biosynthesis of the coenzyme M (2-mercaptoethanesulfonic acid). Catalyzes the decarboxylation of sulfopyruvate to sulfoacetaldehyde. Is not able to decarboxylate the analogous compounds 2-oxoglutarate or 2-oxosuberate. The chain is Sulfopyruvate decarboxylase from Methanosarcina acetivorans (strain ATCC 35395 / DSM 2834 / JCM 12185 / C2A).